The primary structure comprises 489 residues: Probable guanine deaminase (489 aa).

H100 and H102 together coordinate Zn(2+). Substrate contacts are provided by residues 102–105 (HVSQ), 231–232 (RF), 258–261 (HLSE), and D348. Zn(2+) contacts are provided by H258 and D348.

The protein belongs to the metallo-dependent hydrolases superfamily. ATZ/TRZ family. Zn(2+) is required as a cofactor.

It localises to the cytoplasm. The catalysed reaction is guanine + H2O + H(+) = xanthine + NH4(+). Its pathway is purine metabolism; guanine degradation; xanthine from guanine: step 1/1. Catalyzes the hydrolytic deamination of guanine, producing xanthine and ammonia. The chain is Probable guanine deaminase (GUD1) from Saccharomyces cerevisiae (strain ATCC 204508 / S288c) (Baker's yeast).